We begin with the raw amino-acid sequence, 135 residues long: MRLLHTMLRVGDLQRSIAFYTNVLGMKLLRTSENPEYKYSLAFVGYGPETEEAVIELTYNWGVESYDMGNAYGHIALSVDNAAEACERIRQNGGNVTREAGPVKGGSTIIAFVEDPDGYKIELIEAKDAGRGLGN.

The VOC domain occupies 2 to 126 (RLLHTMLRVG…DGYKIELIEA (125 aa)). Residue histidine 5 coordinates Ni(2+). Arginine 9 serves as a coordination point for substrate. Glutamate 56 lines the Ni(2+) pocket. Positions 60 and 74 each coordinate substrate. Ni(2+)-binding residues include histidine 74 and glutamate 122. Glutamate 122 (proton donor/acceptor) is an active-site residue.

It belongs to the glyoxalase I family. In terms of assembly, homodimer. Requires Ni(2+) as cofactor.

It catalyses the reaction (R)-S-lactoylglutathione = methylglyoxal + glutathione. The protein operates within secondary metabolite metabolism; methylglyoxal degradation; (R)-lactate from methylglyoxal: step 1/2. Catalyzes the conversion of hemimercaptal, formed from methylglyoxal and glutathione, to S-lactoylglutathione. The polypeptide is Lactoylglutathione lyase (gloA) (Salmonella typhi).